The chain runs to 199 residues: Recombination protein RecR (199 aa).

The segment at 57-72 (CQSCRTFTEQDLCPIC) adopts a C4-type zinc-finger fold. The Toprim domain maps to 81–176 (GIICVVETPA…VISRIAHGVP (96 aa)).

The protein belongs to the RecR family.

Its function is as follows. May play a role in DNA repair. It seems to be involved in an RecBC-independent recombinational process of DNA repair. It may act with RecF and RecO. This is Recombination protein RecR from Shewanella frigidimarina (strain NCIMB 400).